Reading from the N-terminus, the 72-residue chain is Large ribosomal subunit protein bL28 (72 aa).

It belongs to the bacterial ribosomal protein bL28 family.

This chain is Large ribosomal subunit protein bL28, found in Chlorobium phaeobacteroides (strain DSM 266 / SMG 266 / 2430).